The following is a 185-amino-acid chain: Elongation factor P (185 aa).

It belongs to the elongation factor P family.

The protein localises to the cytoplasm. Its pathway is protein biosynthesis; polypeptide chain elongation. In terms of biological role, involved in peptide bond synthesis. Stimulates efficient translation and peptide-bond synthesis on native or reconstituted 70S ribosomes in vitro. Probably functions indirectly by altering the affinity of the ribosome for aminoacyl-tRNA, thus increasing their reactivity as acceptors for peptidyl transferase. The protein is Elongation factor P of Syntrophomonas wolfei subsp. wolfei (strain DSM 2245B / Goettingen).